A 437-amino-acid polypeptide reads, in one-letter code: Putative ABC transporter ATP-binding protein CTC_00753 (437 aa).

2 ABC transporter domains span residues 1 to 143 and 179 to 416; these read MERE…LPTI and LKFK…QISK. 219–226 contacts ATP; the sequence is GENGAGKS.

It belongs to the ABC transporter superfamily.

It localises to the cell membrane. Probably part of an ABC transporter complex. Responsible for energy coupling to the transport system. The protein is Putative ABC transporter ATP-binding protein CTC_00753 of Clostridium tetani (strain Massachusetts / E88).